A 622-amino-acid chain; its full sequence is Low affinity potassium transport system protein Kup (622 aa).

The next 12 helical transmembrane spans lie at 9 to 29, 49 to 69, 103 to 123, 137 to 157, 165 to 185, 213 to 233, 247 to 267, 276 to 296, 337 to 357, 363 to 383, 396 to 416, and 419 to 439; these read LPAI…TSPL, VFGF…IKYL, VIMG…TPAI, PQLD…LFMI, VGKL…VLGL, VSFI…ALYA, WFTV…ALLL, PFFL…AALA, IYIP…IVSF, LAAA…ILST, LVAL…SANL, and LLSG…IMTT.

Belongs to the HAK/KUP transporter (TC 2.A.72) family.

It is found in the cell inner membrane. It carries out the reaction K(+)(in) + H(+)(in) = K(+)(out) + H(+)(out). Responsible for the low-affinity transport of potassium into the cell. Likely operates as a K(+):H(+) symporter. The sequence is that of Low affinity potassium transport system protein Kup from Salmonella arizonae (strain ATCC BAA-731 / CDC346-86 / RSK2980).